Here is a 56-residue protein sequence, read N- to C-terminus: Ferredoxin (56 aa).

4Fe-4S ferredoxin-type domains are found at residues 2–28 (AYKIADSCVSCGACASECPVNAISQGD) and 29–56 (SIFVIDADTCIDCGNCANVCPVGAPVQE). Cys-9, Cys-12, Cys-15, Cys-19, Cys-38, Cys-41, Cys-44, and Cys-48 together coordinate [4Fe-4S] cluster.

[4Fe-4S] cluster is required as a cofactor.

Its function is as follows. Ferredoxins are iron-sulfur proteins that transfer electrons in a wide variety of metabolic reactions. This is Ferredoxin from Clostridium pasteurianum.